The chain runs to 205 residues: SREBP regulating gene protein (205 aa).

At Met1–Arg16 the chain is on the cytoplasmic side. Residues Trp17–Phe35 form a helical membrane-spanning segment. Over Lys36 to Ala205 the chain is Lumenal. An N-linked (GlcNAc...) asparagine glycan is attached at Asn67.

The protein belongs to the SPRING family. Interacts with SCAP.

The protein localises to the golgi apparatus membrane. Positively regulates hepatic SREBP signaling pathway by modulating the proper localization of SCAP (SREBP cleavage-activating protein) to the endoplasmic reticulum, thereby controlling the level of functional SCAP. This chain is SREBP regulating gene protein, found in Homo sapiens (Human).